The chain runs to 86 residues: uncharacterized protein (86 aa).

A run of 2 helical transmembrane segments spans residues 21 to 43 (VFWVGLVVYYGFVALCWIGEATA) and 53 to 75 (FWYASFLGTFLIPLFMSIIYFYF).

The protein localises to the cell membrane. This is an uncharacterized protein from Archaeoglobus fulgidus (strain ATCC 49558 / DSM 4304 / JCM 9628 / NBRC 100126 / VC-16).